Here is a 604-residue protein sequence, read N- to C-terminus: Lipoprotein LpqB (604 aa).

The first 27 residues, 1–27 (MTMRAARLSGSTGLTAALVAVLLVLTG), serve as a signal peptide directing secretion. A lipid anchor (N-palmitoyl cysteine) is attached at cysteine 28. Cysteine 28 carries S-diacylglycerol cysteine lipidation. The interval 35 to 60 (SAPQALGTIDREPTSEGPTPPIAGRD) is disordered.

It belongs to the LpqB lipoprotein family.

It is found in the cell membrane. The chain is Lipoprotein LpqB from Nocardia farcinica (strain IFM 10152).